A 399-amino-acid chain; its full sequence is Elongation factor Tu (399 aa).

In terms of domain architecture, tr-type G spans 10–208 (KPHVNIGTIG…TVDSYIPEPE (199 aa)). The tract at residues 19-26 (GHVDHGKT) is G1. Residue 19–26 (GHVDHGKT) coordinates GTP. Mg(2+) is bound at residue threonine 26. A G2 region spans residues 64 to 68 (GITIN). The segment at 85–88 (DAPG) is G3. Residues 85–89 (DAPGH) and 140–143 (NKVD) each bind GTP. Residues 140-143 (NKVD) form a G4 region. The segment at 178–180 (SAL) is G5.

Belongs to the TRAFAC class translation factor GTPase superfamily. Classic translation factor GTPase family. EF-Tu/EF-1A subfamily. In terms of assembly, monomer.

Its subcellular location is the cytoplasm. It carries out the reaction GTP + H2O = GDP + phosphate + H(+). Functionally, GTP hydrolase that promotes the GTP-dependent binding of aminoacyl-tRNA to the A-site of ribosomes during protein biosynthesis. This chain is Elongation factor Tu, found in Streptococcus pyogenes serotype M12 (strain MGAS2096).